Reading from the N-terminus, the 59-residue chain is uncharacterized protein (59 aa).

The helical transmembrane segment at 7–24 (FLLVFIILAQLLSCTPSA) threads the bilayer.

It localises to the membrane. This is an uncharacterized protein from Rickettsia prowazekii (strain Madrid E).